A 109-amino-acid chain; its full sequence is Small ribosomal subunit protein bS16 (109 aa).

The disordered stretch occupies residues 87–109 (ALRETPKKSAPKAKAQERAKAAG). The segment covering 100–109 (KAQERAKAAG) has biased composition (basic and acidic residues).

The protein belongs to the bacterial ribosomal protein bS16 family.

The protein is Small ribosomal subunit protein bS16 of Rhodospirillum centenum (strain ATCC 51521 / SW).